The chain runs to 397 residues: Succinate--CoA ligase [ADP-forming] subunit beta (397 aa).

Residues 9 to 254 enclose the ATP-grasp domain; that stretch reads KALLKGYGAP…ETEEDAKEIE (246 aa). ATP is bound by residues Lys-46, 53–55, Glu-109, Ala-112, and Glu-117; that span reads GRG. Residues Asn-209 and Asp-223 each coordinate Mg(2+). Substrate-binding positions include Asn-274 and 331 to 333; that span reads GIM.

Belongs to the succinate/malate CoA ligase beta subunit family. As to quaternary structure, heterotetramer of two alpha and two beta subunits. The cofactor is Mg(2+).

The enzyme catalyses succinate + ATP + CoA = succinyl-CoA + ADP + phosphate. It catalyses the reaction GTP + succinate + CoA = succinyl-CoA + GDP + phosphate. It participates in carbohydrate metabolism; tricarboxylic acid cycle; succinate from succinyl-CoA (ligase route): step 1/1. In terms of biological role, succinyl-CoA synthetase functions in the citric acid cycle (TCA), coupling the hydrolysis of succinyl-CoA to the synthesis of either ATP or GTP and thus represents the only step of substrate-level phosphorylation in the TCA. The beta subunit provides nucleotide specificity of the enzyme and binds the substrate succinate, while the binding sites for coenzyme A and phosphate are found in the alpha subunit. In Rhizobium etli (strain ATCC 51251 / DSM 11541 / JCM 21823 / NBRC 15573 / CFN 42), this protein is Succinate--CoA ligase [ADP-forming] subunit beta.